The following is a 65-amino-acid chain: uncharacterized protein (65 aa).

The protein resides in the plastid. Its subcellular location is the chloroplast. This is an uncharacterized protein from Mesostigma viride (Green alga).